A 226-amino-acid polypeptide reads, in one-letter code: MGMGKGYFVTGTDTGVGKTRVTCALLHAFAATGKTVVGMKPVAAGCENGMWPDVELLAAASNISVQREHINPYALVPPIAPHIAADRAGIEIDLEVIRQAHLELKKKADIVIVEGAGGFLVPLNDHEDSVALVQALGLAVLLVVGMRLGCINHALLTAHAVRAAQIPLAGWVANRIDPEMAVFKENVLALEQRLDCPLLGILPYDQNHDARDLSSLLDIARIGMSS.

Thr19 is a Mg(2+) binding site. The active site involves Lys40. Residues Asp53 and Glu114 each coordinate Mg(2+). ATP contacts are provided by residues Asp53, 114–117, and 174–175; these read EGAG and NR.

Belongs to the dethiobiotin synthetase family. Homodimer. Mg(2+) serves as cofactor.

The protein localises to the cytoplasm. The enzyme catalyses (7R,8S)-7,8-diammoniononanoate + CO2 + ATP = (4R,5S)-dethiobiotin + ADP + phosphate + 3 H(+). The protein operates within cofactor biosynthesis; biotin biosynthesis; biotin from 7,8-diaminononanoate: step 1/2. Catalyzes a mechanistically unusual reaction, the ATP-dependent insertion of CO2 between the N7 and N8 nitrogen atoms of 7,8-diaminopelargonic acid (DAPA, also called 7,8-diammoniononanoate) to form a ureido ring. The sequence is that of ATP-dependent dethiobiotin synthetase BioD from Nitrosospira multiformis (strain ATCC 25196 / NCIMB 11849 / C 71).